We begin with the raw amino-acid sequence, 142 residues long: HTH-type transcriptional regulator MntR (142 aa).

An HTH dtxR-type domain is found at 1–63; the sequence is MPTPSMEDYI…YEKYRGLILT (63 aa). Positions 8, 11, 77, 99, 102, and 103 each coordinate Mn(2+).

Belongs to the DtxR/MntR family. In terms of assembly, homodimer.

The protein localises to the cytoplasm. DNA binding is strongly activated by Mn(2+). In terms of biological role, central regulator of manganese homeostasis. This is HTH-type transcriptional regulator MntR from Listeria monocytogenes serotype 4b (strain CLIP80459).